A 364-amino-acid chain; its full sequence is MREETREQPAPLRSGLTTGSCATATSLAAAKLLLTGQRDDAVDITLPKGKVVQMRLEFCRLIGECAEAGTLKDAGDDPDVTHGALLYSQVRLLAEPGIGFVAGSGVGTVTRPGLVLAVGEPAINPVPRRMISEHLQRLADACGYLGGFEVTVNVQGGEQLALKTMNPRLGILGGLSILGTSGIVRPFSCAAYIASIHQGIDVAHTNGYTHIAACTGNASEDTMRRVYGLPEIALIEMGDFVGAVLKHLRKVPVPRLTLCGGFGKISKLAAGHMDLHSRHSSIDLPQLAGWAADIGADEALQAAISGANTSQQALALAHAAGIALGDAVCAHALAFARSVVPAQVHVEVFAIDRQGGIVGQAGVQ.

Belongs to the CbiD family.

The enzyme catalyses Co-precorrin-5B + S-adenosyl-L-methionine = Co-precorrin-6A + S-adenosyl-L-homocysteine. It functions in the pathway cofactor biosynthesis; adenosylcobalamin biosynthesis; cob(II)yrinate a,c-diamide from sirohydrochlorin (anaerobic route): step 6/10. Catalyzes the methylation of C-1 in cobalt-precorrin-5B to form cobalt-precorrin-6A. The protein is Cobalt-precorrin-5B C(1)-methyltransferase of Pseudomonas putida (strain ATCC 700007 / DSM 6899 / JCM 31910 / BCRC 17059 / LMG 24140 / F1).